Consider the following 413-residue polypeptide: MKGALGSPVAAAGAAMQESFGCVVANRFHQLLDDESDPFDILREAERRRQQQLQRKRRDEAAAAAGAGPRGGRSPAGASGHRAGAGGRRESQKERKSLPAPVAQRPDSPGGGLQAPGQKRTPRRGEQQGWNDSRGPEGMLERAERRSYREYRPYETERQADFTAEKFPDEKPGDRFDRDRPLRGRGGPRGGMRGRGRGGPGNRVFDAFDQRGKREFERYGGNDKIAVRTEDNMGGCGVRTWGSGKDTSDVEPTAPMEEPTVVEESQGTPEEESPAKVPELEVEEETQVQEMTLDEWKNLQEQTRPKPEFNIRKPESTVPSKAVVIHKSKYRDDMVKDDYEDDSHVFRKPANDITSQLEINFGNLPRPGRGARGGTRGGRGRIRRAENYGPRAEVVMQDVAPNPDDPEDFPALS.

Residues S7 and S36 each carry the phosphoserine modification. Residues 40-64 (DILREAERRRQQQLQRKRRDEAAAA) are a coiled coil. The tract at residues 42-206 (LREAERRRQQ…RGGPGNRVFD (165 aa)) is disordered. Over residues 62-82 (AAAAGAGPRGGRSPAGASGHR) the composition is skewed to low complexity. Residue R70 is modified to Omega-N-methylarginine. The residue at position 74 (S74) is a Phosphoserine. Residues 87–97 (GRRESQKERKS) show a composition bias toward basic and acidic residues. S108 is modified (phosphoserine). Basic and acidic residues predominate over residues 139 to 182 (MLERAERRSYREYRPYETERQADFTAEKFPDEKPGDRFDRDRPL). Residues 184 to 201 (GRGGPRGGMRGRGRGGPG) show a composition bias toward gly residues. Glycyl lysine isopeptide (Lys-Gly) (interchain with G-Cter in SUMO1); alternate cross-links involve residues K213 and K276. Glycyl lysine isopeptide (Lys-Gly) (interchain with G-Cter in SUMO2); alternate cross-links involve residues K213 and K276. The tract at residues 227 to 320 (VRTEDNMGGC…IRKPESTVPS (94 aa)) is disordered. Basic and acidic residues predominate over residues 294 to 315 (DEWKNLQEQTRPKPEFNIRKPE). K336 is covalently cross-linked (Glycyl lysine isopeptide (Lys-Gly) (interchain with G-Cter in SUMO1); alternate). Residue K336 forms a Glycyl lysine isopeptide (Lys-Gly) (interchain with G-Cter in SUMO2); alternate linkage. T354 and T375 each carry phosphothreonine; by PKC. The segment at 360-413 (NFGNLPRPGRGARGGTRGGRGRIRRAENYGPRAEVVMQDVAPNPDDPEDFPALS) is disordered. Positions 404 to 413 (DDPEDFPALS) are enriched in acidic residues.

The protein belongs to the SERBP1-HABP4 family. In terms of assembly, associates with ribosomes; promoting ribosome stabilization. Interacts with EEF2/eEF2; promoting ribosome stabilization. Interacts with FMR1. Interacts with FXR1 and FXR2. Interacts with CHD3 (via C-terminus). Interacts (via C-terminus) with RACK1. Interacts with p53/TP53. Interacts (via N-terminus) with SRSF9; this interaction is direct. Interacts with SYNCRIP; this interaction is direct. Interacts with MEF2C (via N-terminus); this interaction decreases DNA-binding activity of MEF2C in myocardial cells in response to mechanical stress. Interacts with PRMT1 (via N-terminus). Interacts with SPIN1. In terms of processing, methylated. Methylation is decreased by phorbol 12-myristate 13-acetate (PMA)-activated PKC, in vitro. Post-translationally, phosphorylated by phorbol 12-myristate 13-acetate (PMA)-activated PKC isoforms at Thr-354 and Thr-375. Highly expressed in brain, heart, and kidney, and moderately expressed in skeletal muscle. Also expressed in a variety of tumor cell lines and in activated but not resting leukocytes.

It localises to the nucleus. Its subcellular location is the cytoplasm. It is found in the stress granule. The protein resides in the sarcoplasm. The protein localises to the nuclear body. It localises to the nucleolus. Its subcellular location is the nucleus speckle. It is found in the cajal body. The protein resides in the gem. Functionally, ribosome-binding protein that promotes ribosome hibernation, a process during which ribosomes are stabilized in an inactive state and preserved from proteasomal degradation. Acts via its association with EEF2/eEF2 factor at the A-site of the ribosome, promoting ribosome stabilization in an inactive state compatible with storage. Plays a key role in ribosome hibernation in the mature oocyte by promoting ribosome stabilization. Ribosomes, which are produced in large quantities during oogenesis, are stored and translationally repressed in the oocyte and early embryo. Also binds RNA, regulating transcription and pre-mRNA splicing. Binds (via C-terminus) to poly(U) RNA. Seems to play a role in PML-nuclear bodies formation. Negatively regulates DNA-binding activity of the transcription factor MEF2C in myocardial cells in response to mechanical stress. This chain is Intracellular hyaluronan-binding protein 4, found in Homo sapiens (Human).